The chain runs to 79 residues: Small ribosomal subunit protein uS17 (79 aa).

This sequence belongs to the universal ribosomal protein uS17 family. As to quaternary structure, part of the 30S ribosomal subunit.

Its function is as follows. One of the primary rRNA binding proteins, it binds specifically to the 5'-end of 16S ribosomal RNA. The protein is Small ribosomal subunit protein uS17 of Bartonella tribocorum (strain CIP 105476 / IBS 506).